Consider the following 289-residue polypeptide: Golgi to ER traffic protein 2 (289 aa).

Residues 1–10 (MSEVSEAEKR) show a composition bias toward basic and acidic residues. Residues 1 to 68 (MSEVSEAEKR…LQRGSNSGQS (68 aa)) form a disordered region. Over 1 to 153 (MSEVSEAEKR…VGVHQFQVRQ (153 aa)) the chain is Cytoplasmic. Over residues 11–21 (RILREKRKQKF) the composition is skewed to basic residues. The segment covering 33-68 (ITTQQPGGASGDSTVTSAEISDNEGSLQRGSNSGQS) has biased composition (polar residues). The chain crosses the membrane as a helical span at residues 154–173 (LKAYMLLLRWAILLPFIYYV). Topologically, residues 174–196 (MHPGTAHWLHTSRFLHFVMEPRN) are lumenal. The helical transmembrane segment at 197–216 (FFMVFTTFEVASISIYYQVL) threads the bilayer. The Cytoplasmic portion of the chain corresponds to 217–263 (LTLERTNKVNSLSYSSKLVTWAGLVPDGMLPIDNLQGKVVVALHYWD). The helical transmembrane segment at 264–284 (ILSMYLTDLSLCLVAAGLMKY) threads the bilayer. The Lumenal portion of the chain corresponds to 285–289 (YHAAP).

Belongs to the GET2 family. In terms of assembly, component of the Golgi to ER traffic (GET) complex, which is composed of GET1, GET2 and GET3. Within the complex, GET1 and GET2 form a heterotetramer which is stabilized by phosphatidylinositol binding and which binds to the GET3 homodimer.

It is found in the endoplasmic reticulum membrane. The protein localises to the golgi apparatus membrane. Functionally, required for the post-translational delivery of tail-anchored (TA) proteins to the endoplasmic reticulum. Together with GET1, acts as a membrane receptor for soluble GET3, which recognizes and selectively binds the transmembrane domain of TA proteins in the cytosol. The GET complex cooperates with the HDEL receptor ERD2 to mediate the ATP-dependent retrieval of resident ER proteins that contain a C-terminal H-D-E-L retention signal from the Golgi to the ER. The protein is Golgi to ER traffic protein 2 of Eremothecium gossypii (strain ATCC 10895 / CBS 109.51 / FGSC 9923 / NRRL Y-1056) (Yeast).